Consider the following 119-residue polypeptide: Large ribosomal subunit protein bL20 (119 aa).

The protein belongs to the bacterial ribosomal protein bL20 family.

In terms of biological role, binds directly to 23S ribosomal RNA and is necessary for the in vitro assembly process of the 50S ribosomal subunit. It is not involved in the protein synthesizing functions of that subunit. The sequence is that of Large ribosomal subunit protein bL20 from Afipia carboxidovorans (strain ATCC 49405 / DSM 1227 / KCTC 32145 / OM5) (Oligotropha carboxidovorans).